Consider the following 91-residue polypeptide: CRISPR-associated endoribonuclease Cas2 2 (91 aa).

D8 is a binding site for Mg(2+).

Belongs to the CRISPR-associated endoribonuclease Cas2 protein family. In terms of assembly, homodimer, forms a heterotetramer with a Cas1 homodimer. It depends on Mg(2+) as a cofactor.

Its function is as follows. CRISPR (clustered regularly interspaced short palindromic repeat), is an adaptive immune system that provides protection against mobile genetic elements (viruses, transposable elements and conjugative plasmids). CRISPR clusters contain sequences complementary to antecedent mobile elements and target invading nucleic acids. CRISPR clusters are transcribed and processed into CRISPR RNA (crRNA). Functions as a ssRNA-specific endoribonuclease. Involved in the integration of spacer DNA into the CRISPR cassette. The polypeptide is CRISPR-associated endoribonuclease Cas2 2 (Pyrobaculum aerophilum (strain ATCC 51768 / DSM 7523 / JCM 9630 / CIP 104966 / NBRC 100827 / IM2)).